The primary structure comprises 191 residues: UPF0312 protein Sputcn32_2702 (191 aa).

The signal sequence occupies residues 1 to 22 (MKKQLLSALIGVSLLAPMAASA).

The protein belongs to the UPF0312 family. Type 1 subfamily.

It is found in the periplasm. The chain is UPF0312 protein Sputcn32_2702 from Shewanella putrefaciens (strain CN-32 / ATCC BAA-453).